The sequence spans 330 residues: Tryptophan--tRNA ligase (330 aa).

Residues 10–12 (QAT) and 18–19 (GN) each bind ATP. The 'HIGH' region signature appears at 11–19 (ATGSLHLGN). Residue aspartate 134 coordinates L-tryptophan. ATP contacts are provided by residues 146–148 (GED), isoleucine 186, and 195–199 (KMSKS). The 'KMSKS' region motif lies at 195 to 199 (KMSKS).

This sequence belongs to the class-I aminoacyl-tRNA synthetase family. As to quaternary structure, homodimer.

The protein localises to the cytoplasm. The enzyme catalyses tRNA(Trp) + L-tryptophan + ATP = L-tryptophyl-tRNA(Trp) + AMP + diphosphate + H(+). Functionally, catalyzes the attachment of tryptophan to tRNA(Trp). The chain is Tryptophan--tRNA ligase from Rickettsia conorii (strain ATCC VR-613 / Malish 7).